Reading from the N-terminus, the 275-residue chain is Nitrogenase iron protein 1 (275 aa).

9–16 serves as a coordination point for ATP; that stretch reads GKGGIGKS. A [4Fe-4S] cluster-binding site is contributed by C98. R101 bears the ADP-ribosylarginine; by dinitrogenase reductase ADP-ribosyltransferase mark. Residue C132 coordinates [4Fe-4S] cluster.

The protein belongs to the NifH/BchL/ChlL family. In terms of assembly, homodimer. [4Fe-4S] cluster is required as a cofactor. Post-translationally, the reversible ADP-ribosylation of Arg-101 inactivates the nitrogenase reductase and regulates nitrogenase activity.

It catalyses the reaction N2 + 8 reduced [2Fe-2S]-[ferredoxin] + 16 ATP + 16 H2O = H2 + 8 oxidized [2Fe-2S]-[ferredoxin] + 2 NH4(+) + 16 ADP + 16 phosphate + 6 H(+). In terms of biological role, the key enzymatic reactions in nitrogen fixation are catalyzed by the nitrogenase complex, which has 2 components: the iron protein and the molybdenum-iron protein. The chain is Nitrogenase iron protein 1 (nifH1) from Methanobacterium ivanovii.